A 444-amino-acid polypeptide reads, in one-letter code: Cadaverine/lysine antiporter (444 aa).

The next 12 helical transmembrane spans lie at 7-27 (IGLFACTGVVAGNMMGSGIAL), 35-55 (IGGIAIWGWIISIIGAMSLAY), 95-115 (IGNLAIGITAVSYLSTFFPVL), 123-143 (IACIAIVWVFTFVNMLGGTWV), 149-169 (IGLVLVLIPVVMTAIVGWHWF), 193-213 (ILLCLWAFVGVESAAVSTGMV), 222-242 (LATMLGTGLAGIVYIAATQVL), 273-293 (LVSAFTAFACLTSLGSWMMLV), 323-343 (LLLAAVKMTALMILITLMNSA), 354-374 (LTGIAVLLTMLPYFYSCVDLI), 384-404 (FVSLICSVLGCVFCFIALMGA), and 405-425 (SSFELAGTFIVSLIILMFYAR).

This sequence belongs to the amino acid-polyamine-organocation (APC) superfamily. Basic amino acid/polyamine antiporter (APA) (TC 2.A.3.2) family.

It localises to the cell inner membrane. It carries out the reaction cadaverine(in) + L-lysine(out) = cadaverine(out) + L-lysine(in). Functionally, under acidic conditions, in the presence of lysine, functions as a cadaverine:lysine antiporter that facilitates the excretion of cadaverine and the uptake of lysine. The sequence is that of Cadaverine/lysine antiporter (cadB) from Escherichia coli O157:H7.